A 299-amino-acid polypeptide reads, in one-letter code: NAD kinase (299 aa).

Asp-71 functions as the Proton acceptor in the catalytic mechanism. NAD(+) is bound by residues 71-72 (DG), 145-146 (ND), Arg-173, Asp-175, 186-191 (TAYALS), Ala-210, and Gln-248.

It belongs to the NAD kinase family. Requires a divalent metal cation as cofactor.

The protein localises to the cytoplasm. It catalyses the reaction NAD(+) + ATP = ADP + NADP(+) + H(+). Involved in the regulation of the intracellular balance of NAD and NADP, and is a key enzyme in the biosynthesis of NADP. Catalyzes specifically the phosphorylation on 2'-hydroxyl of the adenosine moiety of NAD to yield NADP. The protein is NAD kinase of Bordetella avium (strain 197N).